The primary structure comprises 226 residues: 7-cyano-7-deazaguanine synthase (226 aa).

Position 7 to 17 (7 to 17 (ISGGMDSLVTT)) interacts with ATP. The Zn(2+) site is built by Cys-187, Cys-195, Cys-198, and Cys-201.

Belongs to the QueC family. It depends on Zn(2+) as a cofactor.

It carries out the reaction 7-carboxy-7-deazaguanine + NH4(+) + ATP = 7-cyano-7-deazaguanine + ADP + phosphate + H2O + H(+). It functions in the pathway purine metabolism; 7-cyano-7-deazaguanine biosynthesis. Catalyzes the ATP-dependent conversion of 7-carboxy-7-deazaguanine (CDG) to 7-cyano-7-deazaguanine (preQ(0)). This chain is 7-cyano-7-deazaguanine synthase, found in Chlorobium limicola (strain DSM 245 / NBRC 103803 / 6330).